Consider the following 425-residue polypeptide: MISNFKSISLTYRKAPLEIRERVALNEAECKSLMLRIKDFTDTAELLILSTCNRTEIYYTSNEDYSNDIIKLLGVEKNITGLIQQKEYFEIYNEQADAVLHLFEVGIGLDSQVVGDMQIVNQVKYAYQWSADLNLAGPFLHRLMHTIFFTNKRVVQETAFRDGAASVSYATVELSEELLSATPNANILIVGLGEIGADVCRNFKANTSFKNITLTNRSPLKSEALAAECGIEHVPFETLWEAVAKADLVISSVAKEEPLFTKEEIQKLSILSHKYFIDLSVPRSVDARAEELPGIIVYDIDHIQNRSNEALENRLNAIPHVRKIILDSIVEFNEWSKEMEVSPTINKLKNALEQIRKEELSRFVKQLSDEEAKKVDEITKSIMQKIIKLPVLQLKAACKRGEAETLIDVLNDLFNLDKQPEQIRD.

Substrate-binding positions include 51–54 (TCNR), serine 111, 116–118 (DMQ), and glutamine 122. Catalysis depends on cysteine 52, which acts as the Nucleophile. 191 to 196 (GLGEIG) serves as a coordination point for NADP(+).

It belongs to the glutamyl-tRNA reductase family. Homodimer.

It carries out the reaction (S)-4-amino-5-oxopentanoate + tRNA(Glu) + NADP(+) = L-glutamyl-tRNA(Glu) + NADPH + H(+). It participates in porphyrin-containing compound metabolism; protoporphyrin-IX biosynthesis; 5-aminolevulinate from L-glutamyl-tRNA(Glu): step 1/2. Catalyzes the NADPH-dependent reduction of glutamyl-tRNA(Glu) to glutamate 1-semialdehyde (GSA). In Cytophaga hutchinsonii (strain ATCC 33406 / DSM 1761 / CIP 103989 / NBRC 15051 / NCIMB 9469 / D465), this protein is Glutamyl-tRNA reductase.